We begin with the raw amino-acid sequence, 333 residues long: Fructose-1,6-bisphosphatase class 1 (333 aa).

Mg(2+) is bound by residues E92, D113, L115, and D116. Residues 116–119 (DGSS), N209, Y242, and K272 each bind substrate. Position 278 (E278) interacts with Mg(2+).

It belongs to the FBPase class 1 family. Homotetramer. It depends on Mg(2+) as a cofactor.

It localises to the cytoplasm. It catalyses the reaction beta-D-fructose 1,6-bisphosphate + H2O = beta-D-fructose 6-phosphate + phosphate. The protein operates within carbohydrate biosynthesis; Calvin cycle. This is Fructose-1,6-bisphosphatase class 1 from Chlorobaculum parvum (strain DSM 263 / NCIMB 8327) (Chlorobium vibrioforme subsp. thiosulfatophilum).